A 328-amino-acid chain; its full sequence is Malate dehydrogenase (328 aa).

Residue 12–18 (GAAGQIG) coordinates NAD(+). Substrate contacts are provided by R93 and R99. NAD(+)-binding positions include N106, Q113, and 130 to 132 (VGN). N132 and R163 together coordinate substrate. Catalysis depends on H188, which acts as the Proton acceptor.

Belongs to the LDH/MDH superfamily. MDH type 2 family.

It catalyses the reaction (S)-malate + NAD(+) = oxaloacetate + NADH + H(+). In terms of biological role, catalyzes the reversible oxidation of malate to oxaloacetate. In Saccharopolyspora erythraea (strain ATCC 11635 / DSM 40517 / JCM 4748 / NBRC 13426 / NCIMB 8594 / NRRL 2338), this protein is Malate dehydrogenase.